The chain runs to 41 residues: MKVRNSLKSLRSRHRDNRLVRRKGRVYVINKTQRRFKARQG.

The protein belongs to the bacterial ribosomal protein bL36 family.

This Nitrobacter winogradskyi (strain ATCC 25391 / DSM 10237 / CIP 104748 / NCIMB 11846 / Nb-255) protein is Large ribosomal subunit protein bL36.